The primary structure comprises 77 residues: U3-theraphotoxin-Hhn1k (77 aa).

An N-terminal signal peptide occupies residues 1-14 (TFAGLVLLFVVCYA). Positions 15 to 42 (SESEEKEFPKEMLSSIFAVDNDFKQEER) are excised as a propeptide. 2 disulfides stabilise this stretch: Cys-44-Cys-57 and Cys-56-Cys-69.

The protein belongs to the neurotoxin 10 (Hwtx-1) family. 51 (Hntx-8) subfamily. Hntx-8 sub-subfamily. Expressed by the venom gland.

The protein localises to the secreted. Functionally, ion channel inhibitor. The polypeptide is U3-theraphotoxin-Hhn1k (Cyriopagopus hainanus (Chinese bird spider)).